We begin with the raw amino-acid sequence, 327 residues long: MPALLERPKLSNAMARALHRHIMMERERKRQEEEEVDKMMEQKMKEEQERRKKKEMEERMSLEETKEQILKLEEKLLALQEEKHQLFLQLKKVLHEEEKRRRKEQSDLTTLTSAAYQQSLTVHTGTHLLSMQGSPGGHNRPGTLMAADRAKQMFGPQVLTTRHYVGSAAAFAGTPEHGQFQGSPGGAYGTAQPPPHYGPTQPAYSPSQQLRAPSAFPAVQYLSQPQPQPYAVHGHFQPTQTGFLQPGGALSLQKQMEHANQQTGFSDSSSLRPMHPQALHPAPGLLASPQLPVQMQPAGKSGFAATSQPGPRLPFIQHSQNPRFYHK.

Positions 14 to 109 (MARALHRHIM…RRRKEQSDLT (96 aa)) form a coiled coil. Positions 26–65 (RERKRQEEEEVDKMMEQKMKEEQERRKKKEMEERMSLEET) are disordered. Glycyl lysine isopeptide (Lys-Gly) (interchain with G-Cter in SUMO1) cross-links involve residues Lys45 and Lys71. Residues 61 to 94 (SLEETKEQILKLEEKLLALQEEKHQLFLQLKKVL) form an interaction with SUMO region. Disordered regions lie at residues 177–208 (HGQF…SPSQ) and 253–327 (QKQM…FYHK). The span at 253–271 (QKQMEHANQQTGFSDSSSL) shows a compositional bias: polar residues. Arg312 is subject to Asymmetric dimethylarginine. A compositionally biased stretch (polar residues) spans 317-327 (QHSQNPRFYHK). The residue at position 323 (Arg323) is an Asymmetric dimethylarginine; alternate. Residue Arg323 is modified to Omega-N-methylarginine; alternate.

In terms of assembly, component of the N-Cor repressor complex, at least composed of NCOR1, NCOR2, HDAC3, TBL1X, TBL1R, CORO2A and GPS2. Interacts (when sumoylated at Lys-71) with TBL1X; leading to protect GPS2 from degradation by the proteasome. Interacts with UBE2N; leading to inhibit UBE2N/Ubc13 activity. Interacts with TRAF1. Interacts with TRAF2. Interacts with TRAF6. Interacts with PPARG (when in the liganded conformation). Interacts with (sumoylated) NR1H2; interaction with sumoylated NR1H2 and NR5A2 onto hepatic acute phase protein promoters prevents N-Cor corepressor complex dissociation. Interacts with (sumoylated) NR5A2; interaction with sumoylated NR1H2 and NR5A2 onto hepatic acute phase protein promoters prevents N-Cor corepressor complex dissociation. Interacts with NR1H3. Interacts with RFX4. Interacts with ANKRD26. (Microbial infection) Interacts (via coiled coil domain) with hepatitis C virus (HCV) NS5A. Post-translationally, sumoylation regulates its subcellular location. Sumoylation at Lys-45 and Lys-71 regulates the shuttling between the cytoplasm and the nucleus. Sumoylation at Lys-71 is required for interaction with TBL1X. Sumoylated at Lys-45 and Lys-71 in mitochondrion. Desumoylation by SENP1 leads to relocation from the mitochondria to the nucleus. Ubiquitinated at the C-terminus by SIAH2; leading to its degradation by the proteasome. Interaction with TBL1X and methylation at Arg-323 protect GPS2 against ubiquitination and degradation. In terms of processing, methylated at Arg-312 and Arg-323 by PRMT6. Methylation at Arg-323 protects from degradation by the proteasome. In terms of tissue distribution, widely expressed.

The protein localises to the nucleus. It localises to the mitochondrion. The protein resides in the cytoplasm. It is found in the cytosol. In terms of biological role, key regulator of inflammation, lipid metabolism and mitochondrion homeostasis that acts by inhibiting the activity of the ubiquitin-conjugating enzyme UBE2N/Ubc13, thereby inhibiting 'Lys-63'-linked ubiquitination. In the nucleus, can both acts as a corepressor and coactivator of transcription, depending on the context. Acts as a transcription coactivator in adipocytes by promoting the recruitment of PPARG to promoters: acts by inhibiting the activity of the ubiquitin-conjugating enzyme UBE2N/Ubc13, leading to stabilization of KDM4A and subsequent histone H3 'Lys-9' (H3K9) demethylation. Promotes cholesterol efflux by acting as a transcription coactivator. Acts as a regulator of B-cell development by inhibiting UBE2N/Ubc13, thereby restricting the activation of Toll-like receptors (TLRs) and B-cell antigen receptors (BCRs) signaling pathways. Acts as a key mediator of mitochondrial stress response: in response to mitochondrial depolarization, relocates from the mitochondria to the nucleus following desumoylation and specifically promotes expression of nuclear-encoded mitochondrial genes. Promotes transcription of nuclear-encoded mitochondrial genes by inhibiting UBE2N/Ubc13. Can also act as a corepressor as part of the N-Cor repressor complex by repressing active PPARG. Plays an anti-inflammatory role in macrophages and is required for insulin sensitivity by acting as a corepressor. Plays an anti-inflammatory role during the hepatic acute phase response by interacting with sumoylated NR1H2 and NR5A2 proteins, thereby preventing N-Cor corepressor complex dissociation. In the cytosol, also plays a non-transcriptional role by regulating insulin signaling and pro-inflammatory pathways. In the cytoplasm, acts as a negative regulator of inflammation by inhibiting the pro-inflammatory TNF-alpha pathway; acts by repressing UBE2N/Ubc13 activity. In the cytoplasm of adipocytes, restricts the activation of insulin signaling via inhibition of UBE2N/Ubc13-mediated ubiquitination of AKT. Able to suppress G-protein- and mitogen-activated protein kinase-mediated signal transduction. Acts as a tumor-suppressor in liposarcoma. (Microbial infection) Required for efficient replication of hepatitis C virus (HCV) by promoting the interaction between VAPA and HCV virus protein NS5A. The chain is G protein pathway suppressor 2 from Homo sapiens (Human).